A 291-amino-acid polypeptide reads, in one-letter code: 6-deoxy-6-sulfogluconolactonase (291 aa).

The a divalent metal cation site is built by Glu-17, Asn-148, and Asp-198. Asp-198 acts as the Proton donor/acceptor in catalysis.

This sequence belongs to the SMP-30/CGR1 family. A divalent metal cation serves as cofactor.

It carries out the reaction 6-deoxy-6-sulfo-D-glucono-1,5-lactone + H2O = 6-deoxy-6-sulfo-D-gluconate + H(+). Its function is as follows. Catalyzes the hydrolysis of 6-deoxy-6-sulfo-D-glucono-1,5-lactone to form 6-deoxy-6-sulfo-D-gluconate. Is involved in a degradation pathway of sulfoquinovose (SQ) that allows P.putida SQ1 to use SQ as the sole carbon and energy source for growth. The protein is 6-deoxy-6-sulfogluconolactonase of Pseudomonas putida (Arthrobacter siderocapsulatus).